The chain runs to 354 residues: Probable N-acetylmuramoyl-L-alanine amidase (354 aa).

A signal peptide spans 1–39; the sequence is MVKVINNFVKVNQYDRPGLKLAAVKGIVMHWTATPGASA. In terms of domain architecture, N-acetylmuramoyl-L-alanine amidase spans 40-152; sequence LNERNYFNGT…YDVTNKGCPT (113 aa).

The protein belongs to the N-acetylmuramoyl-L-alanine amidase 2 family.

The protein resides in the secreted. The catalysed reaction is Hydrolyzes the link between N-acetylmuramoyl residues and L-amino acid residues in certain cell-wall glycopeptides.. The polypeptide is Probable N-acetylmuramoyl-L-alanine amidase (Bacillus licheniformis).